The following is a 127-amino-acid chain: uncharacterized protein (127 aa).

The chain crosses the membrane as a helical span at residues 85 to 107 (VYLGKIGFVLLHVFYLSCIAYYD).

The protein resides in the mitochondrion membrane. This is an uncharacterized protein from Dictyostelium discoideum (Social amoeba).